The following is a 172-amino-acid chain: Ribosomally synthesized cyclic peptide phomopsin precursor phomA (172 aa).

The N-terminal stretch at 1–18 is a signal peptide; sequence MRFTPAIVIAAFCSLAVA. 11 consecutive propeptides follow at residues 19–35, 42–50, 57–65, 72–79, 86–93, 100–108, 115–122, 129–137, 144–151, 158–165, and Lys-172; these read APAA…AVED, KKRGEAVED, KRGEAVED, and RKRGEAVED.

Post-translationally, phomA is processed by several endopeptidases including kexin proteases as well as the cluster-specific S41 family peptidase phomP1 and the oligopeptidase phomG to produce 10 identical copies of the hexapeptide Tyr-Val-Ile-Pro-Ile-Asp, that is further modified to yield phomapsins. The timing and order of proteolysis of the phomA precursor and PTMs are still unknown. Two tyrosinase-like enzymes, phomQ1 and phomQ2, catalyze the chlorination and hydroxylation of Tyr, respectively. PhomYb, is proposed to be involved in the construction of the macrocyclic structure. The other 4 ustYa family proteins may be involved in PTMs that generate the unique structure of phomopsin A. PhomYa is required for the hydroxylation of C-beta of Tyr. PhomYc, phomYd, and phomYe are responsible for the biosynthesis of 2,3-dehydroisoleucine (dIle), 2,3-dehydroaspartic acid (dAsp), and 3,4-dehydroproline (dPro), respectively. While dIle formation by phomYc is indispensable for the installation of dAsp by phomYd, the order of the other PTMs have not been elucidated yet. Most of the biosynthetic enzymes likely have broad substrate specificity, and thus, there might be a metabolic grid from a precursor to phomopsin A. The enzyme(s) responsible for the biosynthesis of 3,4-dehydrovaline (dVal) have also not been identified yet. Finally, phomM acts as an S-adenosylmethionine-dependent alpha-N-methyltransferase that catalyzes two successive N-methylation reactions, converting N-desmethyl-phomopsin A to phomopsin A and phomopsin A further to an N,N-dimethylated congener called phomopsin E.

It functions in the pathway mycotoxin biosynthesis. Ribosomally synthesized cyclic peptide phomopsin precursor; part of the gene cluster that mediates the biosynthesis of the phomopsins, a group of hexapeptide mycotoxins which infects lupins and causes lupinosis disease in livestock. The phomA translated product contains a 10-fold repeated peptide embedding the hexapeptide Tyr-Val-Ile-Pro-Ile-Asp, that is converted into phomapsins. After being excised from the precursor peptide by kexin proteases, the core peptides are cyclized and modified post-translationally by enzymes encoded within the corresponding gene cluster. In Diaporthe leptostromiformis (Lupinosis disease fungus), this protein is Ribosomally synthesized cyclic peptide phomopsin precursor phomA.